Consider the following 337-residue polypeptide: Casein kinase I isoform alpha (337 aa).

Positions 20-288 constitute a Protein kinase domain; sequence YRVIRKIGSG…YLRQLFRILF (269 aa). ATP is bound by residues 26–34 and Lys49; that span reads IGSGSFGDI. Asp139 acts as the Proton acceptor in catalysis.

It belongs to the protein kinase superfamily. CK1 Ser/Thr protein kinase family. Casein kinase I subfamily. In terms of assembly, interacts with cos. Mg(2+) serves as cofactor. In terms of processing, phosphorylated. The dephosphorylated kinase is active in the cytoplasm while the active kinase in the nucleus is phosphorylated.

It localises to the cytoplasm. Its subcellular location is the nucleus. The enzyme catalyses L-seryl-[protein] + ATP = O-phospho-L-seryl-[protein] + ADP + H(+). It carries out the reaction L-threonyl-[protein] + ATP = O-phospho-L-threonyl-[protein] + ADP + H(+). Its activity is regulated as follows. Activity increases following DNA damage. In terms of biological role, casein kinases are operationally defined by their preferential utilization of acidic proteins such as caseins as substrates. Can phosphorylate a large number of proteins. Negative regulator of wg signaling. Phosphorylates arm directly or indirectly and stimulates its degradation which prevents inappropriate wg signaling. Phosphorylates smo which promotes its accumulation at the cell surface and its signaling activity in response to hh. Together with dco, regulates proteolytic processing of ci by phosphorylating it, which promotes its binding to slmb, the F-box recognition component of the SCF(slmb) E3 ubiquitin-protein ligase required for ci processing. Inhibits condensin II interphase activity by promoting degradation of the Cap-H2 regulatory subunit and limiting the levels of chromatin-bound Cap-H2 which regulates interphase chromosome organization. The chain is Casein kinase I isoform alpha (CkIalpha) from Drosophila melanogaster (Fruit fly).